The chain runs to 228 residues: Ribose-5-phosphate isomerase A (228 aa).

Residues 31–34 (TGST), 85–88 (DGAD), and 97–100 (KGGG) contribute to the substrate site. Glu106 (proton acceptor) is an active-site residue. A substrate-binding site is contributed by Lys124.

Belongs to the ribose 5-phosphate isomerase family. In terms of assembly, homodimer.

It catalyses the reaction aldehydo-D-ribose 5-phosphate = D-ribulose 5-phosphate. The protein operates within carbohydrate degradation; pentose phosphate pathway; D-ribose 5-phosphate from D-ribulose 5-phosphate (non-oxidative stage): step 1/1. Functionally, catalyzes the reversible conversion of ribose-5-phosphate to ribulose 5-phosphate. This is Ribose-5-phosphate isomerase A from Haloarcula marismortui (strain ATCC 43049 / DSM 3752 / JCM 8966 / VKM B-1809) (Halobacterium marismortui).